The primary structure comprises 209 residues: Small ribosomal subunit protein uS4 (209 aa).

The region spanning 99 to 161 (CRLDNIAFRL…SSKLVVVEMG (63 aa)) is the S4 RNA-binding domain.

It belongs to the universal ribosomal protein uS4 family. In terms of assembly, part of the 30S ribosomal subunit. Contacts protein S5. The interaction surface between S4 and S5 is involved in control of translational fidelity.

One of the primary rRNA binding proteins, it binds directly to 16S rRNA where it nucleates assembly of the body of the 30S subunit. Its function is as follows. With S5 and S12 plays an important role in translational accuracy. The chain is Small ribosomal subunit protein uS4 from Acidobacterium capsulatum (strain ATCC 51196 / DSM 11244 / BCRC 80197 / JCM 7670 / NBRC 15755 / NCIMB 13165 / 161).